Here is an 877-residue protein sequence, read N- to C-terminus: Leucine--tRNA ligase (877 aa).

The 'HIGH' region motif lies at 43-53 (PYPSGRIHMGH). The 'KMSKS' region motif lies at 628 to 632 (KMSKS). Residue Lys-631 coordinates ATP.

The protein belongs to the class-I aminoacyl-tRNA synthetase family.

The protein resides in the cytoplasm. It carries out the reaction tRNA(Leu) + L-leucine + ATP = L-leucyl-tRNA(Leu) + AMP + diphosphate. In Brucella abortus (strain S19), this protein is Leucine--tRNA ligase.